The primary structure comprises 231 residues: MKSNYAVIVAAGKGKRMKMPINKQFICIQGKPILYYSISVFSKNPLVDKIVLVCAEDEIEYCKQEIVKKYNFDKVVKIVSGGKERQHSVFNALKVLENCSVVLIHDGARPFVTDRIIEDGIKYSNMYGACACGVVPKDTIKIKGKEGFSYKTLVRKELFIVQTPQCFDYNLIYDCHKKLANNKVQVTDDTTVAEYFGNMVYLYEGSYDNIKITTPEDLIIAENIFKTHKYI.

The protein belongs to the IspD/TarI cytidylyltransferase family. IspD subfamily.

It carries out the reaction 2-C-methyl-D-erythritol 4-phosphate + CTP + H(+) = 4-CDP-2-C-methyl-D-erythritol + diphosphate. The protein operates within isoprenoid biosynthesis; isopentenyl diphosphate biosynthesis via DXP pathway; isopentenyl diphosphate from 1-deoxy-D-xylulose 5-phosphate: step 2/6. Functionally, catalyzes the formation of 4-diphosphocytidyl-2-C-methyl-D-erythritol from CTP and 2-C-methyl-D-erythritol 4-phosphate (MEP). The protein is 2-C-methyl-D-erythritol 4-phosphate cytidylyltransferase of Clostridium kluyveri (strain NBRC 12016).